A 311-amino-acid polypeptide reads, in one-letter code: 4-hydroxy-3-methylbut-2-enyl diphosphate reductase (311 aa).

Residue cysteine 12 coordinates [4Fe-4S] cluster. 2 residues coordinate (2E)-4-hydroxy-3-methylbut-2-enyl diphosphate: histidine 41 and histidine 74. Dimethylallyl diphosphate contacts are provided by histidine 41 and histidine 74. The isopentenyl diphosphate site is built by histidine 41 and histidine 74. Cysteine 96 is a binding site for [4Fe-4S] cluster. Histidine 124 lines the (2E)-4-hydroxy-3-methylbut-2-enyl diphosphate pocket. Position 124 (histidine 124) interacts with dimethylallyl diphosphate. Residue histidine 124 participates in isopentenyl diphosphate binding. Residue glutamate 126 is the Proton donor of the active site. Position 168 (threonine 168) interacts with (2E)-4-hydroxy-3-methylbut-2-enyl diphosphate. Cysteine 198 serves as a coordination point for [4Fe-4S] cluster. Positions 226, 227, 228, and 270 each coordinate (2E)-4-hydroxy-3-methylbut-2-enyl diphosphate. 4 residues coordinate dimethylallyl diphosphate: serine 226, serine 227, asparagine 228, and serine 270. Positions 226, 227, 228, and 270 each coordinate isopentenyl diphosphate.

It belongs to the IspH family. It depends on [4Fe-4S] cluster as a cofactor.

The enzyme catalyses isopentenyl diphosphate + 2 oxidized [2Fe-2S]-[ferredoxin] + H2O = (2E)-4-hydroxy-3-methylbut-2-enyl diphosphate + 2 reduced [2Fe-2S]-[ferredoxin] + 2 H(+). The catalysed reaction is dimethylallyl diphosphate + 2 oxidized [2Fe-2S]-[ferredoxin] + H2O = (2E)-4-hydroxy-3-methylbut-2-enyl diphosphate + 2 reduced [2Fe-2S]-[ferredoxin] + 2 H(+). It participates in isoprenoid biosynthesis; dimethylallyl diphosphate biosynthesis; dimethylallyl diphosphate from (2E)-4-hydroxy-3-methylbutenyl diphosphate: step 1/1. The protein operates within isoprenoid biosynthesis; isopentenyl diphosphate biosynthesis via DXP pathway; isopentenyl diphosphate from 1-deoxy-D-xylulose 5-phosphate: step 6/6. In terms of biological role, catalyzes the conversion of 1-hydroxy-2-methyl-2-(E)-butenyl 4-diphosphate (HMBPP) into a mixture of isopentenyl diphosphate (IPP) and dimethylallyl diphosphate (DMAPP). Acts in the terminal step of the DOXP/MEP pathway for isoprenoid precursor biosynthesis. In Saccharophagus degradans (strain 2-40 / ATCC 43961 / DSM 17024), this protein is 4-hydroxy-3-methylbut-2-enyl diphosphate reductase.